The primary structure comprises 339 residues: UDP-3-O-acylglucosamine N-acyltransferase (339 aa).

Histidine 238 functions as the Proton acceptor in the catalytic mechanism.

Belongs to the transferase hexapeptide repeat family. LpxD subfamily. In terms of assembly, homotrimer.

It carries out the reaction a UDP-3-O-[(3R)-3-hydroxyacyl]-alpha-D-glucosamine + a (3R)-hydroxyacyl-[ACP] = a UDP-2-N,3-O-bis[(3R)-3-hydroxyacyl]-alpha-D-glucosamine + holo-[ACP] + H(+). The protein operates within bacterial outer membrane biogenesis; LPS lipid A biosynthesis. In terms of biological role, catalyzes the N-acylation of UDP-3-O-acylglucosamine using 3-hydroxyacyl-ACP as the acyl donor. Is involved in the biosynthesis of lipid A, a phosphorylated glycolipid that anchors the lipopolysaccharide to the outer membrane of the cell. This is UDP-3-O-acylglucosamine N-acyltransferase from Aeromonas hydrophila subsp. hydrophila (strain ATCC 7966 / DSM 30187 / BCRC 13018 / CCUG 14551 / JCM 1027 / KCTC 2358 / NCIMB 9240 / NCTC 8049).